Consider the following 89-residue polypeptide: DNA/RNA-binding protein Alba 2 (89 aa).

It belongs to the histone-like Alba family. Forms homodimers and homotetramers. Interacts with Alba 1.

Its subcellular location is the cytoplasm. It is found in the chromosome. Functionally, binds double-stranded DNA tightly but without sequence specificity. Involved in DNA compaction. In Archaeoglobus fulgidus (strain ATCC 49558 / DSM 4304 / JCM 9628 / NBRC 100126 / VC-16), this protein is DNA/RNA-binding protein Alba 2.